Consider the following 120-residue polypeptide: MSASVPADLRNLRACLLCSLVKSVESFQKEGCENCEDVLHLKGDEEKVYDCTSANYDGMIAAMSNNESWVCKWQKMQRKVKGMYAISVSGVLPNNIVSELKSLGVRYKPNQRDYSTQFKK.

The segment at M1–L39 is interaction with spt-5. The C4-type zinc-finger motif lies at C15–C35.

Belongs to the SPT4 family. Interacts with spt-5 to form DSIF. DSIF interacts with RNA polymerase II and with the positive transcription elongation factor b complex (P-TEFb complex), which is composed of cdk-9 and cyclin-T (cit-1.1 or cit-1.2).

The protein resides in the nucleus. Functionally, may function as a component of the DRB sensitivity-inducing factor complex (DSIF complex), which regulates transcription elongation by RNA polymerase II. DSIF may enhance transcriptional pausing at sites proximal to the promoter, which may in turn facilitate the assembly of an elongation competent RNA polymerase II complex. In Caenorhabditis elegans, this protein is Transcription elongation factor SPT4 (spt-4).